We begin with the raw amino-acid sequence, 325 residues long: DNA-directed RNA polymerase subunit alpha (325 aa).

The alpha N-terminal domain (alpha-NTD) stretch occupies residues 1–231; the sequence is MQNSLLKPRI…DQLNVFAALE (231 aa). Residues 246–325 form an alpha C-terminal domain (alpha-CTD) region; sequence VDPILLRPVD…ENWPPAGLEK (80 aa).

It belongs to the RNA polymerase alpha chain family. In terms of assembly, homodimer. The RNAP catalytic core consists of 2 alpha, 1 beta, 1 beta' and 1 omega subunit. When a sigma factor is associated with the core the holoenzyme is formed, which can initiate transcription.

The enzyme catalyses RNA(n) + a ribonucleoside 5'-triphosphate = RNA(n+1) + diphosphate. In terms of biological role, DNA-dependent RNA polymerase catalyzes the transcription of DNA into RNA using the four ribonucleoside triphosphates as substrates. The polypeptide is DNA-directed RNA polymerase subunit alpha (Herminiimonas arsenicoxydans).